Reading from the N-terminus, the 268-residue chain is Esterase PIR7B (268 aa).

Ser-86 (acyl-ester intermediate) is an active-site residue. Catalysis depends on charge relay system residues Asp-218 and His-246.

It belongs to the AB hydrolase superfamily.

Exhibits esterase activity towards naphthol AS-acetate in vitro. The protein is Esterase PIR7B (PIR7B) of Oryza sativa subsp. japonica (Rice).